The following is a 188-amino-acid chain: 2-amino-4-hydroxy-6-hydroxymethyldihydropteridine pyrophosphokinase (188 aa).

The protein belongs to the HPPK family.

The enzyme catalyses 6-hydroxymethyl-7,8-dihydropterin + ATP = (7,8-dihydropterin-6-yl)methyl diphosphate + AMP + H(+). It participates in cofactor biosynthesis; tetrahydrofolate biosynthesis; 2-amino-4-hydroxy-6-hydroxymethyl-7,8-dihydropteridine diphosphate from 7,8-dihydroneopterin triphosphate: step 4/4. Catalyzes the transfer of pyrophosphate from adenosine triphosphate (ATP) to 6-hydroxymethyl-7,8-dihydropterin, an enzymatic step in folate biosynthesis pathway. The sequence is that of 2-amino-4-hydroxy-6-hydroxymethyldihydropteridine pyrophosphokinase (folK) from Mycobacterium tuberculosis (strain ATCC 25618 / H37Rv).